Here is a 314-residue protein sequence, read N- to C-terminus: 3'-5' exoribonuclease YhaM (314 aa).

The HD domain maps to 163-279 (HVVSMLNLAK…LHYIDNLDAK (117 aa)).

This sequence belongs to the YhaM family.

Its function is as follows. Shows a 3'-5' exoribonuclease activity. This chain is 3'-5' exoribonuclease YhaM, found in Bacillus velezensis (strain DSM 23117 / BGSC 10A6 / LMG 26770 / FZB42) (Bacillus amyloliquefaciens subsp. plantarum).